The sequence spans 305 residues: Oxidoreductase swnR (305 aa).

Belongs to the NmrA-type oxidoreductase family. Isoflavone reductase subfamily.

The enzyme catalyses L-pipecolate + O2 = L-1-piperideine-6-carboxylate + H2O2 + H(+). The protein operates within mycotoxin biosynthesis. In terms of biological role, oxidoreductase; part of the gene cluster that mediates the biosynthesis of swainsonine (SW), a cytotoxic fungal alkaloid and a potential cancer therapy drug. Swainsonine production occurs via a multibranched pathway and is dispensable for fungal colonization of plants and infection of insect hosts. The first step of swainsonine biosynthesis is the production of the precursor pipecolic acid (PA) via conversion of L-lysine (Lys) to 1-piperideine-6-carboxylate (P6C) by the aminotransferase swnA, the latter being further reduced to PA by the reductase swnR. PA can be converted from lysine by both the SW biosynthetic cluster and the unclustered genes such as lysine cyclodeaminase. The PKS-NRPS hybrid synthetase swnK uptakes and condensates PA and malonyl-CoA with and without skipping of the ketoreductase (KR) domain in order to produce 3 intermediates, 1-oxoindolizidine, (1S)-1-hydroxyindolizin, and (1R)-1-hydroxyindolizine; with the transisomer (1S)-1-hydroxyindolizin being predominant. The terminal thioester reductase (TE) domain of swnK is involved in reduction of the thioester bond to release the intermediate aldehydes. The oxidoreductase swnN could contribute to the reduction of 1-oxoindolizidine to (1S)-1-hydroxyindolizin and (1R)-1-hydroxyindolizine, contributing to the major route of SW production. The dioxygenase swnH2 would be responsible for the oxidization of (1R)-1-hydroxyindolizine into (1R,2S)-1,2-dihydroxyindolizine and of (1S)-1-hydroxyindolizin to yield both (1R,2S)-1,2-dihydroxyindolizine and (1S,2S)-1,2-dihydroxyindolizine. The dioxygenase swnH1 then performs the conversion of the 1,2-dihydroxyindolizine epimers to SW. This Metarhizium robertsii (strain ARSEF 23 / ATCC MYA-3075) (Metarhizium anisopliae (strain ARSEF 23)) protein is Oxidoreductase swnR.